The following is a 255-amino-acid chain: tRNA (guanine-N(1)-)-methyltransferase (255 aa).

S-adenosyl-L-methionine contacts are provided by residues Gly-113 and 133 to 138 (IGDYVL).

Belongs to the RNA methyltransferase TrmD family. As to quaternary structure, homodimer.

The protein localises to the cytoplasm. It carries out the reaction guanosine(37) in tRNA + S-adenosyl-L-methionine = N(1)-methylguanosine(37) in tRNA + S-adenosyl-L-homocysteine + H(+). Its function is as follows. Specifically methylates guanosine-37 in various tRNAs. The sequence is that of tRNA (guanine-N(1)-)-methyltransferase from Klebsiella pneumoniae (strain 342).